We begin with the raw amino-acid sequence, 178 residues long: Fatty-acid and retinol-binding protein 1 (178 aa).

The signal sequence occupies residues 1–16; sequence MYHQLILMALIGVIMA. 2 N-linked (GlcNAc...) asparagine glycosylation sites follow: Asn-44 and Asn-75. Coiled-coil stretches lie at residues 67-89 and 123-153; these read DAAL…ELRN and KLDV…ELKA. N-linked (GlcNAc...) asparagine glycosylation occurs at Asn-157.

It belongs to the fatty-acid and retinol-binding protein (FARBP) family. In terms of processing, N-glycosylated.

It localises to the secreted. In terms of biological role, binds retinol and different fatty acids. This chain is Fatty-acid and retinol-binding protein 1, found in Acanthocheilonema viteae (Filarial nematode worm).